Consider the following 458-residue polypeptide: 5-hydroxytryptamine receptor 2C (458 aa).

The first 32 residues, 1–32 (MVNLRKAVHSFLVHLIGLLVWQCDISVSPVAA), serve as a signal peptide directing secretion. Residues 33–55 (LVTDIFNTSDGGRFKFPDGVQNW) lie on the Extracellular side of the membrane. Residues 56–80 (PALSIVIIIILTIGGNILVIMAVSL) form a helical membrane-spanning segment. Residues 81 to 86 (EKKLHN) lie on the Cytoplasmic side of the membrane. A helical membrane pass occupies residues 87–111 (ATNYFLMSLAIADMLVGLLVMPLSL). Topologically, residues 112–128 (LAILYDYVWPLPRYLCP) are extracellular. An intrachain disulfide couples cysteine 127 to cysteine 207. Residues 129–151 (VWISLDVLFSTASIMHLCAISLD) traverse the membrane as a helical segment. Ergotamine is bound at residue threonine 139. Residues 151–153 (DRY) carry the DRY motif; important for ligand-induced conformation changes motif. The Cytoplasmic portion of the chain corresponds to 152-167 (RYVAIRNPVEHSRFNS). Residues 168–189 (RTKAIMKIAIVWAISIGVSVPI) form a helical membrane-spanning segment. Residues 190–213 (PVIGLRDEEKVFVNNTTCVLNDPN) lie on the Extracellular side of the membrane. Asparagine 203 and asparagine 204 each carry an N-linked (GlcNAc...) asparagine glycan. Ergotamine is bound at residue leucine 209. Residues 214-236 (FVLIGSFVAFFIPLTIMVITYCL) traverse the membrane as a helical segment. Residues 237 to 311 (TIHVLRRQAL…AINNERKASK (75 aa)) are Cytoplasmic-facing. The tract at residues 272-301 (TEEENSANPNQDSNPRRRKKKERRPRGTMQ) is disordered. Positions 287-297 (RRRKKKERRPR) are enriched in basic residues. Residues 312–336 (VLGIVFFVFLVMWCPFFITNILSVL) traverse the membrane as a helical segment. Cysteine 337 and cysteine 341 are oxidised to a cystine. The Extracellular segment spans residues 337–347 (CGKACNQKLME). Residues 348 to 370 (KLLNVFVWIGYVCSGINPLVYTL) traverse the membrane as a helical segment. Residues 364–368 (NPLVY) carry the NPxxY motif; important for ligand-induced conformation changes and signaling motif. At 371 to 458 (FNKIYRRAFS…SVVSERISSV (88 aa)) the chain is on the cytoplasmic side. Residues 456-458 (SSV) carry the PDZ-binding motif.

It belongs to the G-protein coupled receptor 1 family. As to quaternary structure, interacts with MPDZ. Interacts with ARRB2. Interacts with MPP3; this interaction stabilizes the receptor at the plasma membrane and prevents the desensitization of the HTR2C receptor-mediated calcium response.

Its subcellular location is the cell membrane. Functionally, G-protein coupled receptor for 5-hydroxytryptamine (serotonin). Also functions as a receptor for various drugs and psychoactive substances, including ergot alkaloid derivatives, 1-2,5,-dimethoxy-4-iodophenyl-2-aminopropane (DOI) and lysergic acid diethylamide (LSD). Ligand binding causes a conformation change that triggers signaling via guanine nucleotide-binding proteins (G proteins) and modulates the activity of downstream effectors. HTR2C is coupled to G(q)/G(11) G alpha proteins and activates phospholipase C-beta, releasing diacylglycerol (DAG) and inositol 1,4,5-trisphosphate (IP3) second messengers that modulate the activity of phosphatidylinositol 3-kinase and promote the release of Ca(2+) ions from intracellular stores, respectively. Beta-arrestin family members inhibit signaling via G proteins and mediate activation of alternative signaling pathways. Regulates neuronal activity via the activation of short transient receptor potential calcium channels in the brain, and thereby modulates the activation of pro-opiomelanocortin neurons and the release of CRH that then regulates the release of corticosterone. Plays a role in the regulation of appetite and eating behavior, responses to anxiogenic stimuli and stress. Plays a role in insulin sensitivity and glucose homeostasis. This is 5-hydroxytryptamine receptor 2C from Canis lupus familiaris (Dog).